The chain runs to 442 residues: Trigger factor (442 aa).

The 86-residue stretch at 163-248 (YDRVTINYCI…IIKIEKKQEL (86 aa)) folds into the PPIase FKBP-type domain.

The protein belongs to the FKBP-type PPIase family. Tig subfamily.

It localises to the cytoplasm. The catalysed reaction is [protein]-peptidylproline (omega=180) = [protein]-peptidylproline (omega=0). In terms of biological role, involved in protein export. Acts as a chaperone by maintaining the newly synthesized protein in an open conformation. Functions as a peptidyl-prolyl cis-trans isomerase. The sequence is that of Trigger factor from Buchnera aphidicola subsp. Acyrthosiphon pisum (strain Tuc7).